A 542-amino-acid polypeptide reads, in one-letter code: Nuclear hormone receptor family member nhr-35 (542 aa).

A DNA-binding region (nuclear receptor) is located at residues 74 to 149 (NSICHICSDV…SGMRDDQVQS (76 aa)). 2 consecutive NR C4-type zinc fingers follow at residues 77-97 (CHICSDVATGRHYGAIACNGC) and 113-137 (CRFESKCEIDKHNRAVCRYCRFMKC). The NR LBD domain occupies 186–438 (EYDQLLESLL…VLMEELILAE (253 aa)). Positions 445–487 (RQDQTPCSIMNDTPSGSQDMCSPCPEDLLRTSTSSNSPTNSSL) are disordered. The segment covering 448 to 464 (QTPCSIMNDTPSGSQDM) has biased composition (polar residues). Positions 475–487 (TSTSSNSPTNSSL) are enriched in low complexity.

The protein belongs to the nuclear hormone receptor family.

It localises to the nucleus. Functionally, orphan nuclear receptor. The protein is Nuclear hormone receptor family member nhr-35 (nhr-35) of Caenorhabditis elegans.